Here is a 28-residue protein sequence, read N- to C-terminus: Conotoxin de7b (28 aa).

3 disulfide bridges follow: cysteine 2–cysteine 18, cysteine 9–cysteine 22, and cysteine 17–cysteine 27. At proline 4 the chain carries 4-hydroxyproline; partial. Residue glutamate 7 is modified to 4-carboxyglutamate; partial. Proline 14 is modified (4-hydroxyproline; partial).

In terms of tissue distribution, expressed by the venom duct.

The protein resides in the secreted. In terms of biological role, may inhibit sodium (Nav) or calcium channels (Cav). The polypeptide is Conotoxin de7b (Conasprella delessertii (Sozon's cone)).